The primary structure comprises 293 residues: ATP synthase gamma chain (293 aa).

This sequence belongs to the ATPase gamma chain family. In terms of assembly, F-type ATPases have 2 components, CF(1) - the catalytic core - and CF(0) - the membrane proton channel. CF(1) has five subunits: alpha(3), beta(3), gamma(1), delta(1), epsilon(1). CF(0) has three main subunits: a, b and c.

It localises to the cell membrane. Functionally, produces ATP from ADP in the presence of a proton gradient across the membrane. The gamma chain is believed to be important in regulating ATPase activity and the flow of protons through the CF(0) complex. The chain is ATP synthase gamma chain from Streptococcus gordonii (strain Challis / ATCC 35105 / BCRC 15272 / CH1 / DL1 / V288).